The primary structure comprises 82 residues: ATP synthase subunit c, chloroplastic (82 aa).

Helical transmembrane passes span 3–23 (PLIS…ASIG) and 57–77 (FAFM…LLFA).

It belongs to the ATPase C chain family. F-type ATPases have 2 components, F(1) - the catalytic core - and F(0) - the membrane proton channel. F(1) has five subunits: alpha(3), beta(3), gamma(1), delta(1), epsilon(1). F(0) has four main subunits: a(1), b(1), b'(1) and c(10-14). The alpha and beta chains form an alternating ring which encloses part of the gamma chain. F(1) is attached to F(0) by a central stalk formed by the gamma and epsilon chains, while a peripheral stalk is formed by the delta, b and b' chains.

It is found in the plastid. The protein resides in the chloroplast thylakoid membrane. In terms of biological role, f(1)F(0) ATP synthase produces ATP from ADP in the presence of a proton or sodium gradient. F-type ATPases consist of two structural domains, F(1) containing the extramembraneous catalytic core and F(0) containing the membrane proton channel, linked together by a central stalk and a peripheral stalk. During catalysis, ATP synthesis in the catalytic domain of F(1) is coupled via a rotary mechanism of the central stalk subunits to proton translocation. Its function is as follows. Key component of the F(0) channel; it plays a direct role in translocation across the membrane. A homomeric c-ring of between 10-14 subunits forms the central stalk rotor element with the F(1) delta and epsilon subunits. This Mesostigma viride (Green alga) protein is ATP synthase subunit c, chloroplastic.